Here is a 135-residue protein sequence, read N- to C-terminus: MVLESVARIVKVQLPAYLKRLPVPESITGFARLTVSEWLRLLPFLGVLALLGYLAVRPFLPKKKQQKDSLINLKIQKENPKVVNEINIEDLCLTKAAYCRCWRSKTFPACDGSHNKHNELTGDNVGPLILKKKEV.

Over 1–37 (MVLESVARIVKVQLPAYLKRLPVPESITGFARLTVSE) the chain is Lumenal. The helical transmembrane segment at 38–60 (WLRLLPFLGVLALLGYLAVRPFL) threads the bilayer. Topologically, residues 61–135 (PKKKQQKDSL…GPLILKKKEV (75 aa)) are cytoplasmic. The [2Fe-2S] cluster site is built by C99, C101, C110, and H114.

This sequence belongs to the CISD protein family. CISD2 subfamily. In terms of assembly, homodimer. Interacts with BCL2; the interaction is direct and disrupted by BIK interaction with BCL2. Interacts with BCL2L1. Interacts with ITPR1. Requires [2Fe-2S] cluster as cofactor.

Its subcellular location is the endoplasmic reticulum membrane. The protein localises to the mitochondrion outer membrane. Functionally, regulator of autophagy that contributes to antagonize BECN1-mediated cellular autophagy at the endoplasmic reticulum. Participates in the interaction of BCL2 with BECN1 and is required for BCL2-mediated depression of endoplasmic reticulum Ca(2+) stores during autophagy. Contributes to BIK-initiated autophagy, while it is not involved in BIK-dependent activation of caspases. Involved in life span control, probably via its function as regulator of autophagy. The sequence is that of CDGSH iron-sulfur domain-containing protein 2 (CISD2) from Bos taurus (Bovine).